The sequence spans 417 residues: 4-hydroxy-3-methylbut-2-en-1-yl diphosphate synthase (flavodoxin) (417 aa).

[4Fe-4S] cluster contacts are provided by cysteine 304, cysteine 307, cysteine 350, and glutamate 357.

The protein belongs to the IspG family. It depends on [4Fe-4S] cluster as a cofactor.

The catalysed reaction is (2E)-4-hydroxy-3-methylbut-2-enyl diphosphate + oxidized [flavodoxin] + H2O + 2 H(+) = 2-C-methyl-D-erythritol 2,4-cyclic diphosphate + reduced [flavodoxin]. Its pathway is isoprenoid biosynthesis; isopentenyl diphosphate biosynthesis via DXP pathway; isopentenyl diphosphate from 1-deoxy-D-xylulose 5-phosphate: step 5/6. In terms of biological role, converts 2C-methyl-D-erythritol 2,4-cyclodiphosphate (ME-2,4cPP) into 1-hydroxy-2-methyl-2-(E)-butenyl 4-diphosphate. The sequence is that of 4-hydroxy-3-methylbut-2-en-1-yl diphosphate synthase (flavodoxin) from Rhizobium rhizogenes (strain K84 / ATCC BAA-868) (Agrobacterium radiobacter).